The following is a 452-amino-acid chain: Golgi reassembly-stacking protein 2 (452 aa).

Glycine 2 carries the N-myristoyl glycine lipid modification. 2 consecutive PDZ GRASP-type domains span residues 15–105 and 111–199; these read EGYH…FCSF and NVWH…YGYL. Positions 15 to 215 are GRASP; that stretch reads EGYHVLRVQE…PFEEGKKISL (201 aa). Residues arginine 30 and arginine 47 each carry the dimethylated arginine modification. An important for membrane binding region spans residues 194–199; the sequence is IGYGYL. At serine 214 the chain carries Phosphoserine. Residues threonine 222 and threonine 225 each carry the phosphothreonine modification. A compositionally biased stretch (low complexity) spans 372–424; it reads PESSSAASSGELLSSLPPTSNAPSDPATTTAKADAASSLTVDVTPPTAKAPTT. Positions 372-452 are disordered; it reads PESSSAASSG…AVDANASESP (81 aa). Phosphoserine is present on serine 409. Threonine 415 and threonine 433 each carry phosphothreonine. 4 positions are modified to phosphoserine: serine 436, serine 441, serine 449, and serine 451.

Belongs to the GORASP family. Homodimer. Homooligomer. ER stress induces phosphorylation-dependent monomerization. Interacts with BLZF1/Golgin 45. Identified in a complex with RAB2 and GORASP2. Interacts with JAM2 and JAM3. Interacts with members of the p24 cargo receptors. Interacts with CNIH1 and the cytoplasmic domain of transmembrane TGFA, prior its transit in the trans-Golgi. Interacts with KCTD5. Interacts with TMED2 and TMED3. Interacts with SEC16A in response to ER stress. Interacts (via PDZ GRASP-type 1 domain) with core-glycosylated CFTR in response to ER stress. In terms of processing, myristoylated. Myristoylation is essential for the Golgi targeting. Palmitoylated. Post-translationally, phosphorylated in mitotic cells. ER stress-induced phosphorylation at Ser-441 induces monomerization and subsequent relocalization from Golgi to ER which is essential for mediating unconventional (ER/Golgi-independent) trafficking of CFTR to the cell membrane.

It localises to the golgi apparatus membrane. The protein resides in the endoplasmic reticulum membrane. The protein localises to the golgi apparatus. Key structural protein of the Golgi apparatus. The membrane cisternae of the Golgi apparatus adhere to each other to form stacks, which are aligned side by side to form the Golgi ribbon. Acting in concert with GORASP1/GRASP65, is required for the formation and maintenance of the Golgi ribbon, and may be dispensable for the formation of stacks. However, other studies suggest that GORASP2 plays a role in the assembly and membrane stacking of the Golgi cisternae, and in the process by which Golgi stacks reform after breakdown during mitosis and meiosis. May regulate the intracellular transport and presentation of a defined set of transmembrane proteins, such as transmembrane TGFA. Required for normal acrosome formation during spermiogenesis and normal male fertility, probably by promoting colocalization of JAM2 and JAM3 at contact sites between germ cells and Sertoli cells. Mediates ER stress-induced unconventional (ER/Golgi-independent) trafficking of core-glycosylated CFTR to cell membrane. This Homo sapiens (Human) protein is Golgi reassembly-stacking protein 2 (GORASP2).